Reading from the N-terminus, the 149-residue chain is MAKKITGYVKLQVPAGAANPSPPIGPALGQRGLNIMEFCKAFNAKTAQMEKGTPIPVIITAYQDRSFTFEMKQPPVTFFLKKAAGLKLGKKPASGSKTPGKGPTVGKISEAQLREIAEKKMPDLNCDTVESAVAMIRGSARAMGLEVVA.

This sequence belongs to the universal ribosomal protein uL11 family. As to quaternary structure, part of the ribosomal stalk of the 50S ribosomal subunit. Interacts with L10 and the large rRNA to form the base of the stalk. L10 forms an elongated spine to which L12 dimers bind in a sequential fashion forming a multimeric L10(L12)X complex. Post-translationally, one or more lysine residues are methylated.

Its function is as follows. Forms part of the ribosomal stalk which helps the ribosome interact with GTP-bound translation factors. The polypeptide is Large ribosomal subunit protein uL11 (Methylobacterium radiotolerans (strain ATCC 27329 / DSM 1819 / JCM 2831 / NBRC 15690 / NCIMB 10815 / 0-1)).